The sequence spans 108 residues: UPF0060 membrane protein SH0717 (108 aa).

4 helical membrane passes run 5–25, 31–51, 60–80, and 86–106; these read IFIFLLAGLCEIGGGYLIWLW, SSWLGFIGGVILMMYGVIATF, VYAAYGGVFIVMSLIWAYIVD, and KYDLIGACICIIGVCVMILPS.

This sequence belongs to the UPF0060 family.

It is found in the cell membrane. This is UPF0060 membrane protein SH0717 from Staphylococcus haemolyticus (strain JCSC1435).